Here is a 218-residue protein sequence, read N- to C-terminus: OPA3-like protein (218 aa).

The stretch at 129–179 (NEIMEKQFVLQKKKNELQSSTEEIDSTEKDFDELHKVILKVERELHTLRQN) forms a coiled coil. Residues 175 to 218 (TLRQNTPSQNEQAEATPSKEIPRETVSEKADHPPSSNTKSVSTG) are disordered. Residues 176 to 189 (LRQNTPSQNEQAEA) are compositionally biased toward polar residues. Over residues 194–206 (EIPRETVSEKADH) the composition is skewed to basic and acidic residues. Residues 208 to 218 (PSSNTKSVSTG) show a composition bias toward polar residues.

Belongs to the OPA3 family.

In Schizosaccharomyces pombe (strain 972 / ATCC 24843) (Fission yeast), this protein is OPA3-like protein.